Here is a 516-residue protein sequence, read N- to C-terminus: ADP-ribosylation factor GTPase-activating protein 3 (516 aa).

The region spanning 10-126 is the Arf-GAP domain; sequence LTIFKRLRSV…IKSLASQATR (117 aa). The C4-type zinc finger occupies 25–48; that stretch reads CFDCGAKNPSWASITYGVFLCIDC. Residues 170–199 form a disordered region; sequence AEPSSLTSRPVETTLENNEGGQEQGPSVEG. The span at 173–194 shows a compositional bias: polar residues; sequence SSLTSRPVETTLENNEGGQEQG. Residue serine 231 is modified to Phosphoserine. Residues 243–264 are a coiled coil; that stretch reads NEIEKQAQAADKMKEQEDLAKA. Phosphoserine is present on residues serine 270, serine 274, serine 331, and serine 370. The disordered stretch occupies residues 392-414; that stretch reads KTTGYSDRPTARRKPDYEPVENT. Residues serine 428, serine 451, serine 453, serine 455, serine 457, and serine 458 each carry the phosphoserine modification.

Its subcellular location is the cytoplasm. The protein resides in the golgi apparatus membrane. Its activity is regulated as follows. GAP activity stimulated by phosphatidylinositol 4,5-bisphosphate (PIP2). In terms of biological role, GTPase-activating protein (GAP) for ADP ribosylation factor 1 (ARF1). Hydrolysis of ARF1-bound GTP may lead to dissociation of coatomer from Golgi-derived membranes to allow fusion with target membranes. The protein is ADP-ribosylation factor GTPase-activating protein 3 of Macaca fascicularis (Crab-eating macaque).